The sequence spans 817 residues: Lon protease (817 aa).

Positions 22–216 (VPIMPLSDGV…KVTRQLNHQL (195 aa)) constitute a Lon N-terminal domain. 368 to 375 (GPPGTGKT) is an ATP binding site. A Lon proteolytic domain is found at 604 to 785 (ALTPGVVMGL…GDVLELALNG (182 aa)). Active-site residues include S691 and K734. Positions 784 to 817 (NGNGATKKKKKTPAKSKKSTKPAAKKTAARKSRK) are disordered. A compositionally biased stretch (basic residues) spans 789 to 817 (TKKKKKTPAKSKKSTKPAAKKTAARKSRK).

The protein belongs to the peptidase S16 family. In terms of assembly, homohexamer. Organized in a ring with a central cavity.

Its subcellular location is the cytoplasm. The catalysed reaction is Hydrolysis of proteins in presence of ATP.. In terms of biological role, ATP-dependent serine protease that mediates the selective degradation of mutant and abnormal proteins as well as certain short-lived regulatory proteins. Required for cellular homeostasis and for survival from DNA damage and developmental changes induced by stress. Degrades polypeptides processively to yield small peptide fragments that are 5 to 10 amino acids long. Binds to DNA in a double-stranded, site-specific manner. This chain is Lon protease, found in Desulfosudis oleivorans (strain DSM 6200 / JCM 39069 / Hxd3) (Desulfococcus oleovorans).